Here is a 93-residue protein sequence, read N- to C-terminus: Small ribosomal subunit protein uS19 (93 aa).

Belongs to the universal ribosomal protein uS19 family.

In terms of biological role, protein S19 forms a complex with S13 that binds strongly to the 16S ribosomal RNA. The sequence is that of Small ribosomal subunit protein uS19 from Saccharopolyspora erythraea (strain ATCC 11635 / DSM 40517 / JCM 4748 / NBRC 13426 / NCIMB 8594 / NRRL 2338).